The primary structure comprises 444 residues: Proline--tRNA ligase (444 aa).

It belongs to the class-II aminoacyl-tRNA synthetase family. ProS type 2 subfamily. As to quaternary structure, homodimer.

The protein resides in the cytoplasm. It catalyses the reaction tRNA(Pro) + L-proline + ATP = L-prolyl-tRNA(Pro) + AMP + diphosphate. In terms of biological role, catalyzes the attachment of proline to tRNA(Pro) in a two-step reaction: proline is first activated by ATP to form Pro-AMP and then transferred to the acceptor end of tRNA(Pro). The polypeptide is Proline--tRNA ligase (Pelagibacter ubique (strain HTCC1062)).